The primary structure comprises 201 residues: 3-isopropylmalate dehydratase small subunit (201 aa).

The protein belongs to the LeuD family. LeuD type 1 subfamily. As to quaternary structure, heterodimer of LeuC and LeuD.

It carries out the reaction (2R,3S)-3-isopropylmalate = (2S)-2-isopropylmalate. It functions in the pathway amino-acid biosynthesis; L-leucine biosynthesis; L-leucine from 3-methyl-2-oxobutanoate: step 2/4. Catalyzes the isomerization between 2-isopropylmalate and 3-isopropylmalate, via the formation of 2-isopropylmaleate. The sequence is that of 3-isopropylmalate dehydratase small subunit from Ruegeria pomeroyi (strain ATCC 700808 / DSM 15171 / DSS-3) (Silicibacter pomeroyi).